A 315-amino-acid chain; its full sequence is Glycine--tRNA ligase alpha subunit (315 aa).

Belongs to the class-II aminoacyl-tRNA synthetase family. In terms of assembly, tetramer of two alpha and two beta subunits.

The protein resides in the cytoplasm. The enzyme catalyses tRNA(Gly) + glycine + ATP = glycyl-tRNA(Gly) + AMP + diphosphate. In Pseudomonas paraeruginosa (strain DSM 24068 / PA7) (Pseudomonas aeruginosa (strain PA7)), this protein is Glycine--tRNA ligase alpha subunit.